A 313-amino-acid polypeptide reads, in one-letter code: WD repeat-containing protein 82 (313 aa).

WD repeat units lie at residues 19 to 58 (ENSD…PKRT), 105 to 144 (GHSK…CQGL), 146 to 184 (HLQG…KGPF), 192 to 231 (DRTC…VMHT), 236 to 276 (ANSK…KVAV), and 280 to 313 (KHTG…TIDD).

It belongs to the WD repeat SWD2 family. Component of the SET1/COMPASS complex, at least composed of the catalytic subunit (SETD1A or SETD1B), WDR5, WDR82, RBBP5, ASH2L/ASH2, CXXC1/CFP1, HCFC1 and DPY30. Component of the PNUTS-PP1 phosphatase complex, composed of PPP1R10/PNUTS, TOX4, WDR82, and PPP1CA or PPP1CB or PPP1CC. Associated with multiple protein complexes including an RNA polymerase II complex, MLL3/MLL4 complex and a chaperonin-containing TCP1 complex. Interacts with SETD1B (via N-terminal region); the interaction is direct. Interacts with SETD1A (via N-terminal region); the interaction is direct. Interacts with CUL4B. Interacts with RBBP5. Interacts with POLR2B. Interacts with hyperphosphorylated C-terminal domain (CTD) of RNA polymerase II large subunit (POLR2A). Binds specifically to CTD heptad repeats phosphorylated on 'Ser-5' of each heptad. SETD1A enhances its interaction with POLR2A. Interacts with PPP1R10/PNUTS. Interacts with PPP1CA in the presence of PPP1R10/PNUTS. Interacts with ZC3H4; interaction is independent of the SET1 complex and promotes transcription termination of long non-coding RNAs (lncRNAs).

It is found in the nucleus. The protein resides in the chromosome. The protein localises to the cytoplasm. Functionally, regulatory component of the SET1/COMPASS complex implicated in the tethering of this complex to transcriptional start sites of active genes. Facilitates histone H3 'Lys-4' methylation (H3K4me) via recruitment of the SETD1A or SETD1B to the 'Ser-5' phosphorylated C-terminal domain (CTD) of RNA polymerase II large subunit (POLR2A). Component of the PNUTS-PP1 protein phosphatase complex, a protein phosphatase 1 (PP1) complex that promotes RNA polymerase II transcription pause-release, allowing transcription elongation. PNUTS-PP1 also plays a role in the control of chromatin structure and cell cycle progression during the transition from mitosis into interphase. Together with ZC3H4, but independently of the SET1 complex, part of a transcription termination checkpoint that promotes transcription termination of long non-coding RNAs (lncRNAs). The transcription termination checkpoint is activated by the inefficiently spliced first exon of lncRNAs and promotes transcription termination of lncRNAs and their subsequent degradation by the exosome. In Homo sapiens (Human), this protein is WD repeat-containing protein 82.